Here is a 435-residue protein sequence, read N- to C-terminus: Glutamine synthetase (435 aa).

Residues 12 to 94 (KSIKYFMISY…VAADCVMDDR (83 aa)) form the GS beta-grasp domain. Positions 100–435 (PRVVLKRLVA…QWERDSTLDI (336 aa)) constitute a GS catalytic domain. Mg(2+) contacts are provided by glutamate 123, glutamate 125, glutamate 180, and glutamate 187. Residue glycine 232 participates in L-glutamate binding. A Mg(2+)-binding site is contributed by histidine 236. Serine 240 serves as a coordination point for ATP. 2 residues coordinate L-glutamate: arginine 291 and arginine 315. Residues arginine 315 and arginine 320 each coordinate ATP. Glutamate 328 is a binding site for Mg(2+). Arginine 330 lines the L-glutamate pocket.

It belongs to the glutamine synthetase family. As to quaternary structure, homooctamer. Mg(2+) is required as a cofactor.

The enzyme catalyses L-glutamate + NH4(+) + ATP = L-glutamine + ADP + phosphate + H(+). Functionally, catalyzes the ATP-dependent biosynthesis of glutamine from glutamate and ammonia. The polypeptide is Glutamine synthetase (Rhizobium leguminosarum bv. phaseoli).